The sequence spans 209 residues: Urease accessory protein UreG (209 aa).

11 to 18 contacts GTP; it reads GPVGSGKT.

The protein belongs to the SIMIBI class G3E GTPase family. UreG subfamily. Homodimer. UreD, UreF and UreG form a complex that acts as a GTP-hydrolysis-dependent molecular chaperone, activating the urease apoprotein by helping to assemble the nickel containing metallocenter of UreC. The UreE protein probably delivers the nickel.

The protein resides in the cytoplasm. In terms of biological role, facilitates the functional incorporation of the urease nickel metallocenter. This process requires GTP hydrolysis, probably effectuated by UreG. This Edwardsiella ictaluri (strain 93-146) protein is Urease accessory protein UreG.